The sequence spans 364 residues: UDP-N-acetylglucosamine--N-acetylmuramyl-(pentapeptide) pyrophosphoryl-undecaprenol N-acetylglucosamine transferase (364 aa).

Residues 14 to 16 (TGG), asparagine 126, arginine 163, serine 190, isoleucine 246, 265 to 270 (ALTVSE), and glutamine 291 each bind UDP-N-acetyl-alpha-D-glucosamine.

This sequence belongs to the glycosyltransferase 28 family. MurG subfamily.

It is found in the cell inner membrane. The enzyme catalyses di-trans,octa-cis-undecaprenyl diphospho-N-acetyl-alpha-D-muramoyl-L-alanyl-D-glutamyl-meso-2,6-diaminopimeloyl-D-alanyl-D-alanine + UDP-N-acetyl-alpha-D-glucosamine = di-trans,octa-cis-undecaprenyl diphospho-[N-acetyl-alpha-D-glucosaminyl-(1-&gt;4)]-N-acetyl-alpha-D-muramoyl-L-alanyl-D-glutamyl-meso-2,6-diaminopimeloyl-D-alanyl-D-alanine + UDP + H(+). The protein operates within cell wall biogenesis; peptidoglycan biosynthesis. Its function is as follows. Cell wall formation. Catalyzes the transfer of a GlcNAc subunit on undecaprenyl-pyrophosphoryl-MurNAc-pentapeptide (lipid intermediate I) to form undecaprenyl-pyrophosphoryl-MurNAc-(pentapeptide)GlcNAc (lipid intermediate II). The polypeptide is UDP-N-acetylglucosamine--N-acetylmuramyl-(pentapeptide) pyrophosphoryl-undecaprenol N-acetylglucosamine transferase (Shewanella loihica (strain ATCC BAA-1088 / PV-4)).